Consider the following 143-residue polypeptide: D-aminoacyl-tRNA deacylase (143 aa).

The short motif at 135–136 (GP) is the Gly-cisPro motif, important for rejection of L-amino acids element.

The protein belongs to the DTD family. As to quaternary structure, homodimer.

The protein localises to the cytoplasm. The catalysed reaction is glycyl-tRNA(Ala) + H2O = tRNA(Ala) + glycine + H(+). It carries out the reaction a D-aminoacyl-tRNA + H2O = a tRNA + a D-alpha-amino acid + H(+). In terms of biological role, an aminoacyl-tRNA editing enzyme that deacylates mischarged D-aminoacyl-tRNAs. Also deacylates mischarged glycyl-tRNA(Ala), protecting cells against glycine mischarging by AlaRS. Acts via tRNA-based rather than protein-based catalysis; rejects L-amino acids rather than detecting D-amino acids in the active site. By recycling D-aminoacyl-tRNA to D-amino acids and free tRNA molecules, this enzyme counteracts the toxicity associated with the formation of D-aminoacyl-tRNA entities in vivo and helps enforce protein L-homochirality. This Mycolicibacterium paratuberculosis (strain ATCC BAA-968 / K-10) (Mycobacterium paratuberculosis) protein is D-aminoacyl-tRNA deacylase.